Reading from the N-terminus, the 488-residue chain is Germacrene A hydroxylase (488 aa).

Residues 1 to 6 (MEVSLT) lie on the Cytoplasmic side of the membrane. Residues 7–23 (TSIALATIVFFLYKLLT) traverse the membrane as a helical; Signal-anchor for type II membrane protein segment. Topologically, residues 24–488 (RPTSSKNRLP…KTELMLVPSF (465 aa)) are lumenal. 4 N-linked (GlcNAc...) asparagine glycosylation sites follow: Asn169, Asn260, Asn379, and Asn412. Heme is bound at residue Cys432.

Belongs to the cytochrome P450 family. Heme is required as a cofactor. As to expression, expressed in leaf primordia.

The protein resides in the endoplasmic reticulum membrane. It carries out the reaction (+)-(R)-germacrene A + 3 reduced [NADPH--hemoprotein reductase] + 3 O2 = germacra-1(10),4,11(13)-trien-12-oate + 3 oxidized [NADPH--hemoprotein reductase] + 4 H2O + 4 H(+). Its pathway is secondary metabolite biosynthesis; terpenoid biosynthesis. Functionally, involved in the biosynthesis of germacrene-derived sesquiterpene lactones. Catalyzes three consecutive oxidations of germacrene A to produce germacrene A acid. Could also catalyze the three-step oxidation of non-natural substrate amorphadiene to artemisinic acid. This is Germacrene A hydroxylase from Helianthus annuus (Common sunflower).